The chain runs to 407 residues: Nuclear hormone receptor family member nhr-134 (407 aa).

The segment at 11–31 (CEICGQKTSGRHFGVMSCRSC) adopts an NR C4-type zinc-finger fold. An NR C4-type; degenerate zinc finger spans residues 47-66 (RCPNGNCKLLENGKFKCKKC). The NR LBD domain maps to 157-407 (QFHNSLERLA…FSEPDMFEST (251 aa)).

It belongs to the nuclear hormone receptor family.

The protein localises to the nucleus. Its function is as follows. Orphan nuclear receptor. The chain is Nuclear hormone receptor family member nhr-134 (nhr-134) from Caenorhabditis elegans.